The chain runs to 785 residues: Endonuclease MutS2 (785 aa).

Glycine 334–threonine 341 contacts ATP. Residues leucine 710–lysine 785 enclose the Smr domain.

The protein belongs to the DNA mismatch repair MutS family. MutS2 subfamily. As to quaternary structure, homodimer. Binds to stalled ribosomes, contacting rRNA.

Endonuclease that is involved in the suppression of homologous recombination and thus may have a key role in the control of bacterial genetic diversity. Its function is as follows. Acts as a ribosome collision sensor, splitting the ribosome into its 2 subunits. Detects stalled/collided 70S ribosomes which it binds and splits by an ATP-hydrolysis driven conformational change. Acts upstream of the ribosome quality control system (RQC), a ribosome-associated complex that mediates the extraction of incompletely synthesized nascent chains from stalled ribosomes and their subsequent degradation. Probably generates substrates for RQC. In Pediococcus pentosaceus (strain ATCC 25745 / CCUG 21536 / LMG 10740 / 183-1w), this protein is Endonuclease MutS2.